The chain runs to 349 residues: MDMENLTWLHGKPTASGILKANPEDFVVVEDLGFEPDGEGEHLLVRIRKNGCNTQFVADYLARFAKLHPRLVSYAGLKDRHAVTEQWFCLHLPGKEAPDLATFELEGCEVLEAVRHKRKLRIGSLKGNAFTLVLRHITDRQDVEQRLQQIAAQGVPNYFGSQRFGRGGNNLVQARLWANNEIRVKERSKRSFYLSASRSAMFNLISSYRLAQQLSTTVLEGDALQLSGRGSWFVAQADELAALQQRVTAGELNITAPLPGDSELGTHGEALAFEQACLAEQTELLSLIKRERVEGSRRAVLLKPQNMISNWWDDVTLELSFWLPAGSFATSVVREIMNQDRADDTDIIE.

Residue Phe-26 participates in substrate binding. Residue Asp-79 is the Nucleophile of the active site. Residue Asn-128 coordinates substrate. The TRUD domain occupies 154–302 (GVPNYFGSQR…VEGSRRAVLL (149 aa)). Substrate is bound at residue Phe-328.

This sequence belongs to the pseudouridine synthase TruD family.

It carries out the reaction uridine(13) in tRNA = pseudouridine(13) in tRNA. Its function is as follows. Responsible for synthesis of pseudouridine from uracil-13 in transfer RNAs. This chain is tRNA pseudouridine synthase D, found in Yersinia pestis bv. Antiqua (strain Antiqua).